Consider the following 147-residue polypeptide: Cyanate hydratase (147 aa).

Active-site residues include Arg-88, Glu-91, and Ser-114.

It belongs to the cyanase family.

It carries out the reaction cyanate + hydrogencarbonate + 3 H(+) = NH4(+) + 2 CO2. In terms of biological role, catalyzes the reaction of cyanate with bicarbonate to produce ammonia and carbon dioxide. In Cupriavidus necator (strain ATCC 17699 / DSM 428 / KCTC 22496 / NCIMB 10442 / H16 / Stanier 337) (Ralstonia eutropha), this protein is Cyanate hydratase.